Consider the following 239-residue polypeptide: Vesicle-associated protein 1-3 (239 aa).

Methionine 1 is modified (N-acetylmethionine). The residue at position 2 (threonine 2) is an N-acetylthreonine; in Vesicle-associated protein 1-3, N-terminally processed. The Cytoplasmic segment spans residues 2-215 (TTGDLVNIHP…RKETSKKQSG (214 aa)). Positions 6–127 (LVNIHPTELK…EDFKLRVVYI (122 aa)) constitute an MSP domain. A phosphoserine mark is found at serine 133 and serine 164. Residues 179–214 (SMISKLTEEKTSATQQSQKLRLELEMLRKETSKKQS) are a coiled coil. Residues 216–236 (GHSLLLMLLVGLLGCVIGYLL) traverse the membrane as a helical; Anchor for type IV membrane protein segment.

This sequence belongs to the VAMP-associated protein (VAP) (TC 9.B.17) family.

The protein localises to the endoplasmic reticulum membrane. In terms of biological role, may play a role in vesicle trafficking. The protein is Vesicle-associated protein 1-3 (PVA13) of Arabidopsis thaliana (Mouse-ear cress).